An 878-amino-acid chain; its full sequence is DNA mismatch repair protein MutS (878 aa).

629–636 (GPNMAGKS) serves as a coordination point for ATP.

Belongs to the DNA mismatch repair MutS family.

Its function is as follows. This protein is involved in the repair of mismatches in DNA. It is possible that it carries out the mismatch recognition step. This protein has a weak ATPase activity. This chain is DNA mismatch repair protein MutS, found in Roseobacter denitrificans (strain ATCC 33942 / OCh 114) (Erythrobacter sp. (strain OCh 114)).